We begin with the raw amino-acid sequence, 369 residues long: Glutamate 5-kinase (369 aa).

Position 14 (Lys-14) interacts with ATP. Residues Ser-54, Asp-141, and Asn-153 each coordinate substrate. ATP-binding positions include Ser-173–Asp-174 and Thr-215–Lys-221. The PUA domain occupies Arg-277–Ala-355.

Belongs to the glutamate 5-kinase family.

The protein localises to the cytoplasm. It carries out the reaction L-glutamate + ATP = L-glutamyl 5-phosphate + ADP. The protein operates within amino-acid biosynthesis; L-proline biosynthesis; L-glutamate 5-semialdehyde from L-glutamate: step 1/2. Functionally, catalyzes the transfer of a phosphate group to glutamate to form L-glutamate 5-phosphate. The chain is Glutamate 5-kinase from Salinispora arenicola (strain CNS-205).